The sequence spans 523 residues: Sugar carrier protein C (523 aa).

Topologically, residues 1-25 (MPAVGGIPPSGGNRKVYPGNLTLYV) are cytoplasmic. The next 12 helical transmembrane spans lie at 26–46 (TVTCVVAAMGGLIFGYDIGIS), 86–106 (MFTSSLYLAALIASLVASTIT), 120–140 (VLFCAGAIINGAAKAVWMLIL), 143–163 (ILLGFGIGFANQSVPLYLSEM), 172–192 (LNIGFQLSITIGILVANVLNY), 205–225 (LSLGGAMVPALIITVGSLVLP), 298–320 (LTGINVIMFYAPVLFDTIGFGSD), 327–347 (VITGLVNVFATMVSIYGVDKW), 351–371 (FLFLEGGVQMLICQAIVAACI), 387–407 (WYAVVVVLFICIYVSGFAWSW), 433–453 (SVNMFFTFVVAQVFLIMLCHL), and 456–476 (GLFIFFSFFVLIMSIFVYYFL). Topologically, residues 477–523 (PETKGIPIEEMGQVWKQHWYWSRYVVDEDYPNGGLEMGKEGRIPKNV) are cytoplasmic.

This sequence belongs to the major facilitator superfamily. Sugar transporter (TC 2.A.1.1) family.

It is found in the membrane. The sequence is that of Sugar carrier protein C (STC) from Ricinus communis (Castor bean).